A 147-amino-acid polypeptide reads, in one-letter code: Cell division protein SepF 1 (147 aa).

It belongs to the SepF family. Homodimer. Interacts with FtsZ.

It is found in the cytoplasm. Functionally, cell division protein that is part of the divisome complex and is recruited early to the Z-ring. Probably stimulates Z-ring formation, perhaps through the cross-linking of FtsZ protofilaments. Its function overlaps with FtsA. The protein is Cell division protein SepF 1 of Desulforamulus reducens (strain ATCC BAA-1160 / DSM 100696 / MI-1) (Desulfotomaculum reducens).